The following is a 369-amino-acid chain: RNA pseudouridine synthase 5 (369 aa).

In terms of domain architecture, S4 RNA-binding spans 47–104 (APLLGWIQRIQNGQIQIDGEVVKDPNTLLRSGSKLVYSRLPWKEPDTPYSLEVLYEDD).

This sequence belongs to the pseudouridine synthase RluA family.

The catalysed reaction is a uridine in RNA = a pseudouridine in RNA. This chain is RNA pseudouridine synthase 5, found in Arabidopsis thaliana (Mouse-ear cress).